Reading from the N-terminus, the 474-residue chain is NADH-ubiquinone oxidoreductase chain 4 (474 aa).

13 helical membrane-spanning segments follow: residues Ser-34–Phe-54, Leu-86–Val-106, Leu-115–Ser-135, Leu-137–Phe-157, Ala-167–Leu-187, Ala-211–Leu-231, Ala-242–Phe-262, Thr-276–Ser-295, Leu-302–Asp-322, Leu-325–Phe-345, Ala-373–Val-393, Val-405–Phe-425, and Tyr-454–Ile-474.

This sequence belongs to the complex I subunit 4 family.

Its subcellular location is the mitochondrion membrane. The enzyme catalyses a ubiquinone + NADH + 5 H(+)(in) = a ubiquinol + NAD(+) + 4 H(+)(out). Core subunit of the mitochondrial membrane respiratory chain NADH dehydrogenase (Complex I) that is believed to belong to the minimal assembly required for catalysis. Complex I functions in the transfer of electrons from NADH to the respiratory chain. The immediate electron acceptor for the enzyme is believed to be ubiquinone. The sequence is that of NADH-ubiquinone oxidoreductase chain 4 (ND4) from Paramecium tetraurelia.